Consider the following 361-residue polypeptide: POU domain, class 3, transcription factor 4 (361 aa).

Disordered regions lie at residues 99–131 and 144–192; these read PHVA…GQPL and MLEH…PTSD. Residues 119 to 131 are compositionally biased toward polar residues; it reads APNSSITSSGQPL. A compositionally biased stretch (basic and acidic residues) spans 165–183; that stretch reads VLREPPDHGELGSHHCQDH. Residues 186-260 enclose the POU-specific domain; it reads EETPTSDELE…LLNKWLEEAD (75 aa). Residue Ser265 is modified to Phosphoserine. The segment at residues 278-337 is a DNA-binding region (homeobox); that stretch reads KRKKRTSIEVSVKGVLETHFLKCPKPAAQEISSLADSLQLEKEVVRVWFCNRRQKEKRMT. Residues 334–361 form a disordered region; sequence KRMTPPGDQQPHEVYSHTVKTDASCHDL. A compositionally biased stretch (basic and acidic residues) spans 343–361; it reads QPHEVYSHTVKTDASCHDL.

This sequence belongs to the POU transcription factor family. Class-3 subfamily. As to quaternary structure, interacts with HNRNPU. In terms of tissue distribution, brain specific.

The protein resides in the nucleus. Probable transcription factor which exert its primary action widely during early neural development and in a very limited set of neurons in the mature brain. The sequence is that of POU domain, class 3, transcription factor 4 (Pou3f4) from Mus musculus (Mouse).